The sequence spans 400 residues: 3-phenylpropionate/cinnamic acid dioxygenase ferredoxin--NAD(+) reductase component (400 aa).

5 to 36 (TIIIVGGGQAAAMAAASLRQQGFTGELHLFSD) serves as a coordination point for FAD. NAD(+) is bound at residue 146-174 (SVVIIGAGTIGLELAASATQRRCKVTVIE).

This sequence belongs to the bacterial ring-hydroxylating dioxygenase ferredoxin reductase family. This dioxygenase system consists of four proteins: the two subunits of the hydroxylase component (HcaE and HcaF), a ferredoxin (HcaC) and a ferredoxin reductase (HcaD). It depends on FAD as a cofactor.

It carries out the reaction 2 reduced [2Fe-2S]-[ferredoxin] + NAD(+) + H(+) = 2 oxidized [2Fe-2S]-[ferredoxin] + NADH. The protein operates within aromatic compound metabolism; 3-phenylpropanoate degradation. Part of the multicomponent 3-phenylpropionate dioxygenase, that converts 3-phenylpropionic acid (PP) and cinnamic acid (CI) into 3-phenylpropionate-dihydrodiol (PP-dihydrodiol) and cinnamic acid-dihydrodiol (CI-dihydrodiol), respectively. This is 3-phenylpropionate/cinnamic acid dioxygenase ferredoxin--NAD(+) reductase component from Escherichia coli (strain K12 / MC4100 / BW2952).